Here is a 1452-residue protein sequence, read N- to C-terminus: ABC multidrug transporter A (1452 aa).

The disordered stretch occupies residues 1–20 (MNESHEAGKNSSTNVEEREE). Asparagine 2, asparagine 10, asparagine 228, asparagine 287, and asparagine 311 each carry an N-linked (GlcNAc...) asparagine glycan. The 254-residue stretch at 110-363 (LKTLSLARIA…FLQMGFVCPD (254 aa)) folds into the ABC transporter 1 domain. A run of 6 helical transmembrane segments spans residues 474 to 494 (VTISSLFGNTIISLVIASIFY), 508 to 528 (ALLFFAVLMNALGCGLEMLTL), 554 to 574 (MIMDLPYKILNAITSNIVLYF), 583 to 603 (GAFFFFVFTSFILTLTMSMFF), 616 to 636 (VLPFSAVLLLGLSMYTGFAIP), and 725 to 745 (IGVIFAYMFLLGAVYLVATDF). One can recognise an ABC transporter 2 domain in the interval 802-1044 (FQWKDVCFDI…ILIDYFVRNG (243 aa)). 838–845 (GVSGAGKT) serves as a coordination point for ATP. The next 5 helical transmembrane spans lie at 1153–1173 (ALCVLSALFVGFSLFHTPNTI), 1183–1203 (IFMLLTLFGQLIQQIMPHFVA), 1223–1243 (FLIANIVVELPWNSLMSVLMF), 1271–1291 (LMIWTFLLFSSTFAHFMIAAF), and 1297–1317 (AGNLGNLLFLLCLLFCGVLAT). Asparagine 1350, asparagine 1365, and asparagine 1391 each carry an N-linked (GlcNAc...) asparagine glycan. A helical transmembrane segment spans residues 1418–1438 (FGLMWVFIVFNIFAACSLYWW).

Belongs to the ABC transporter superfamily. ABCG family. PDR (TC 3.A.1.205) subfamily.

It localises to the membrane. In terms of biological role, ABC transporter that seems not to be involved in the efflux of toxic substances, at least not the classical compounds such as itraconazole, amphotericin B, voriconazole, posaconazole, ravuconazole, or echinocandins. This chain is ABC multidrug transporter A, found in Aspergillus fumigatus (Neosartorya fumigata).